The following is a 295-amino-acid chain: Nucleotide-binding protein EF_0766 (295 aa).

Glycine 12–threonine 19 is a binding site for ATP. Residue aspartate 62–serine 65 participates in GTP binding.

It belongs to the RapZ-like family.

Functionally, displays ATPase and GTPase activities. This is Nucleotide-binding protein EF_0766 from Enterococcus faecalis (strain ATCC 700802 / V583).